The chain runs to 199 residues: 5'-deoxynucleotidase YfbR (199 aa).

Substrate is bound by residues 18-19 (RW) and histidine 33. Positions 30–142 (VSEHSLQVAM…VKQADALCAY (113 aa)) constitute an HD domain. Positions 33, 68, and 69 each coordinate a divalent metal cation. Substrate-binding positions include aspartate 69, 77 to 80 (DLPT), and aspartate 137. Position 137 (aspartate 137) interacts with a divalent metal cation.

Belongs to the 5DNU family. Homodimer. A divalent metal cation is required as a cofactor.

It localises to the cytoplasm. The enzyme catalyses a 2'-deoxyribonucleoside 5'-phosphate + H2O = a 2'-deoxyribonucleoside + phosphate. Functionally, catalyzes the strictly specific dephosphorylation of 2'-deoxyribonucleoside 5'-monophosphates. This Shigella dysenteriae serotype 1 (strain Sd197) protein is 5'-deoxynucleotidase YfbR.